The primary structure comprises 607 residues: Elongation factor 4 (607 aa).

The tr-type G domain occupies 11–193; that stretch reads SKIRNFSIIA…QIVEKVPAPT (183 aa). GTP contacts are provided by residues 23-28 and 140-143; these read DHGKST and NKID.

This sequence belongs to the TRAFAC class translation factor GTPase superfamily. Classic translation factor GTPase family. LepA subfamily.

Its subcellular location is the cell membrane. It carries out the reaction GTP + H2O = GDP + phosphate + H(+). Its function is as follows. Required for accurate and efficient protein synthesis under certain stress conditions. May act as a fidelity factor of the translation reaction, by catalyzing a one-codon backward translocation of tRNAs on improperly translocated ribosomes. Back-translocation proceeds from a post-translocation (POST) complex to a pre-translocation (PRE) complex, thus giving elongation factor G a second chance to translocate the tRNAs correctly. Binds to ribosomes in a GTP-dependent manner. This Bacillus mycoides (strain KBAB4) (Bacillus weihenstephanensis) protein is Elongation factor 4.